The following is a 690-amino-acid chain: uncharacterized protein (690 aa).

A disordered region spans residues 553–601; it reads DESELLENEDKSESLENEDKSESLENEDKSESLENEDKSESLENEKKEK. Residues 560–601 are compositionally biased toward basic and acidic residues; sequence NEDKSESLENEDKSESLENEDKSESLENEDKSESLENEKKEK.

The protein belongs to the glycosyltransferase 2 family.

This is an uncharacterized protein from Rickettsia bellii (strain RML369-C).